The following is a 136-amino-acid chain: Small ribosomal subunit protein uS11c (136 aa).

The protein belongs to the universal ribosomal protein uS11 family. In terms of assembly, part of the 30S ribosomal subunit.

It is found in the plastid. The protein resides in the chloroplast. This Guizotia abyssinica (Niger) protein is Small ribosomal subunit protein uS11c.